A 485-amino-acid polypeptide reads, in one-letter code: Endo-1,4-beta-xylanase C (485 aa).

Positions 1–19 are cleaved as a signal peptide; sequence MKFLQIIPVLLSLTSTTLA. The 201-residue stretch at 34–234 folds into the GH11 domain; the sequence is KETGNKVGTI…GNGGVSGTAD (201 aa). N-linked (GlcNAc...) asparagine glycosylation is found at Asn56 and Asn107. Residue Glu128 is the Nucleophile of the active site. The N-linked (GlcNAc...) asparagine glycan is linked to Asn175. Residue Glu221 is the Proton donor of the active site. Residues 250 to 450 are disordered; the sequence is ASPAPAGGAP…PQNASDGGNC (201 aa). 2 stretches are compositionally biased toward low complexity: residues 265–330 and 344–354; these read AGND…QGQH and GSDFNNWSQGG. 7 repeat units span residues 275 to 280, 281 to 286, 287 to 292, 293 to 298, 299 to 304, 310 to 315, and 316 to 321. The tract at residues 275–321 is 7 X 6 AA tandem repeats of G-Q-Q-P-P-Q; the sequence is GQQPPQGQQPPQGQQPPQGQQPPQGQQPPQGNDQQGQQPPQGQQPPQ. N-linked (GlcNAc...) asparagine glycosylation is present at Asn349. Tandem repeats lie at residues 353 to 361, 362 to 370, 371 to 379, 380 to 388, 389 to 397, 399 to 407, 408 to 416, and 417 to 425. The 8 X 9 AA tandem repeats of G-G-[SN]-P-W-G-G-N-Q stretch occupies residues 353 to 425; that stretch reads GGSPWGGNQG…QGGNPWGGNQ (73 aa). The span at 355 to 425 shows a compositional bias: gly residues; the sequence is SPWGGNQGGS…QGGNPWGGNQ (71 aa). Residues 426 to 445 show a composition bias toward low complexity; the sequence is WGAPQNAAAPQSAAAPQNAS. An N-linked (GlcNAc...) asparagine glycan is attached at Asn443. A CBM1 domain is found at 449-484; the sequence is NCASLWGQCGGQGYNGPSCCSEGSCKPINEYFHQCQ.

The protein belongs to the glycosyl hydrolase 11 (cellulase G) family.

The protein resides in the secreted. The enzyme catalyses Endohydrolysis of (1-&gt;4)-beta-D-xylosidic linkages in xylans.. The protein operates within glycan degradation; xylan degradation. Its function is as follows. Endo-1,4-beta-xylanase involved in the hydrolysis of xylan, a major structural heterogeneous polysaccharide found in plant biomass representing the second most abundant polysaccharide in the biosphere, after cellulose. This Neocallimastix patriciarum (Rumen fungus) protein is Endo-1,4-beta-xylanase C (xynC).